A 239-amino-acid chain; its full sequence is MQAQERIILALDVGSREQALALVKDLAPHVGAFKVGMQLFNSCGPSIVEEINQLGGRVFLDLKFHDIPNTVAAAGRVITRLNCFMFNVHAAGGREMMRQVVEEVKNEAKKLAVAAPLSLAVTVLTSISQEQLEEEIGVKGMKLKDLVVKWALMAKECGISGVVSSPQEIEAIRAACGPEFKIVTPGIRPAWSEKNDQKRITTPGQALQMGADFMVIGRPITQAANPVEAALKIIGELEE.

Substrate-binding positions include D12, K34, D61–T70, T125, R188, Q197, G217, and R218. Catalysis depends on K63, which acts as the Proton donor.

The protein belongs to the OMP decarboxylase family. Type 1 subfamily. In terms of assembly, homodimer.

It catalyses the reaction orotidine 5'-phosphate + H(+) = UMP + CO2. It participates in pyrimidine metabolism; UMP biosynthesis via de novo pathway; UMP from orotate: step 2/2. Its function is as follows. Catalyzes the decarboxylation of orotidine 5'-monophosphate (OMP) to uridine 5'-monophosphate (UMP). The chain is Orotidine 5'-phosphate decarboxylase from Syntrophomonas wolfei subsp. wolfei (strain DSM 2245B / Goettingen).